Consider the following 465-residue polypeptide: 5-cytosine rRNA methyltransferase nsun-4 (465 aa).

A mitochondrion-targeting transit peptide spans 1 to 6; sequence MSCLRQ. The span at 106-130 shows a compositional bias: basic and acidic residues; that stretch reads QAIETKRKSVEEKANRETQKVKHEI. Residues 106–145 form a disordered region; it reads QAIETKRKSVEEKANRETQKVKHEISNPSTSTNTEDSEPD. Residues 260 to 266, Asp283, Asp316, and Asp335 each bind S-adenosyl-L-methionine; that span reads CAAPGGK. Cys390 functions as the Nucleophile in the catalytic mechanism.

Belongs to the class I-like SAM-binding methyltransferase superfamily. RsmB/NOP family.

Its subcellular location is the mitochondrion. It catalyses the reaction a cytidine in rRNA + S-adenosyl-L-methionine = a 5-methylcytidine in rRNA + S-adenosyl-L-homocysteine + H(+). The enzyme catalyses a cytidine in tRNA + S-adenosyl-L-methionine = a 5-methylcytidine in tRNA + S-adenosyl-L-homocysteine + H(+). Mitochondrial methyltransferase which methylates cytosine to 5-methylcytosine (m5C) in rRNAs and tRNAs at multiple sites. May play a role in the translation of leucine and proline codons. The protein is 5-cytosine rRNA methyltransferase nsun-4 of Caenorhabditis elegans.